A 104-amino-acid polypeptide reads, in one-letter code: Complex III assembly factor LYRM7 (104 aa).

Residue Ser60 is modified to Phosphoserine.

This sequence belongs to the complex I LYR family. Interacts with UQCRFS1.

The protein resides in the mitochondrion matrix. Assembly factor required for Rieske Fe-S protein UQCRFS1 incorporation into the cytochrome b-c1 (CIII) complex. Functions as a chaperone, binding to this subunit within the mitochondrial matrix and stabilizing it prior to its translocation and insertion into the late CIII dimeric intermediate within the mitochondrial inner membrane. This chain is Complex III assembly factor LYRM7 (Lyrm7), found in Mus musculus (Mouse).